A 377-amino-acid polypeptide reads, in one-letter code: Acetylornithine aminotransferase (377 aa).

Pyridoxal 5'-phosphate-binding positions include 94–95 (GT) and phenylalanine 121. Arginine 124 is a N(2)-acetyl-L-ornithine binding site. 206 to 209 (DEIQ) contributes to the pyridoxal 5'-phosphate binding site. An N6-(pyridoxal phosphate)lysine modification is found at lysine 235. Position 263 (serine 263) interacts with N(2)-acetyl-L-ornithine. Position 264 (threonine 264) interacts with pyridoxal 5'-phosphate.

This sequence belongs to the class-III pyridoxal-phosphate-dependent aminotransferase family. ArgD subfamily. As to quaternary structure, homodimer. The cofactor is pyridoxal 5'-phosphate.

Its subcellular location is the cytoplasm. It carries out the reaction N(2)-acetyl-L-ornithine + 2-oxoglutarate = N-acetyl-L-glutamate 5-semialdehyde + L-glutamate. The protein operates within amino-acid biosynthesis; L-arginine biosynthesis; N(2)-acetyl-L-ornithine from L-glutamate: step 4/4. This Lactococcus lactis subsp. lactis (strain IL1403) (Streptococcus lactis) protein is Acetylornithine aminotransferase.